Here is a 241-residue protein sequence, read N- to C-terminus: Carboxy-S-adenosyl-L-methionine synthase (241 aa).

S-adenosyl-L-methionine is bound by residues Tyr38, 63–65, 88–89, 116–117, Asn131, and Arg198; these read GCS, DN, and DI.

It belongs to the class I-like SAM-binding methyltransferase superfamily. Cx-SAM synthase family. In terms of assembly, homodimer.

The enzyme catalyses prephenate + S-adenosyl-L-methionine = carboxy-S-adenosyl-L-methionine + 3-phenylpyruvate + H2O. Functionally, catalyzes the conversion of S-adenosyl-L-methionine (SAM) to carboxy-S-adenosyl-L-methionine (Cx-SAM). In Haemophilus influenzae (strain 86-028NP), this protein is Carboxy-S-adenosyl-L-methionine synthase.